The chain runs to 58 residues: MATVKVTLIKSVSGRIPNHKLCVKGLGLRRIGHTVEVQDTPENRGMINKAYYMLKVEG.

The protein belongs to the universal ribosomal protein uL30 family. As to quaternary structure, part of the 50S ribosomal subunit.

The protein is Large ribosomal subunit protein uL30 of Pseudomonas entomophila (strain L48).